A 301-amino-acid chain; its full sequence is Heme A synthase (301 aa).

The Cytoplasmic segment spans residues 1-5 (MHKKL). The chain crosses the membrane as a helical span at residues 6–26 (AFFSGFVTLGMMLVLIMGGTV). Residues 27-62 (TKTDSGDGCGTDWPLCHGKLIPTNPSVETMIEYSHR) are Extracellular-facing. Cysteines 35 and 42 form a disulfide. Glu-58 is a catalytic residue. His-61 is a binding site for heme o. A helical transmembrane segment spans residues 63-83 (VVSGIEGLLIIALAIWTFIAV). Residues 84-90 (KHRVDVK) lie on the Cytoplasmic side of the membrane. Residues 91 to 111 (IFAFLAFIFMLIQSIIGAGAV) form a helical membrane-spanning segment. The Extracellular portion of the chain corresponds to 112–121 (IWQQSDAILA). Residues 122–142 (LHFGISLVSFASLLILTILLF) form a helical membrane-spanning segment. Residue His-123 participates in heme o binding. Residues 143–158 (EGDREHQVVSRRLRSH) are Cytoplasmic-facing. The helical transmembrane segment at 159 to 179 (LYGLSIYTMIVVYTGAYVRHL) threads the bilayer. The Extracellular segment spans residues 180 to 203 (GATYACVGWPICEQEVWTFESYVQ). Residues Cys-185 and Cys-191 are joined by a disulfide bond. A helical transmembrane segment spans residues 204–224 (MGHRVMAGLLVLYTLYVLYLA). His-206 is a binding site for heme b. At 225–234 (RKEMNRLIER) the chain is on the cytoplasmic side. A helical membrane pass occupies residues 235–255 (GMMASLFFILLQVGTGAWIVL). Topologically, residues 256–259 (GGHA) are extracellular. Residues 260 to 280 (TYVPLLHAFLITCYFGILSYL) form a helical membrane-spanning segment. Residue His-266 coordinates heme b. At 281 to 301 (SYHAYRSTARQDGAQLKNMNG) the chain is on the cytoplasmic side.

Belongs to the COX15/CtaA family. Type 1 subfamily. In terms of assembly, interacts with CtaB. Heme b is required as a cofactor.

Its subcellular location is the cell membrane. The catalysed reaction is Fe(II)-heme o + 2 A + H2O = Fe(II)-heme a + 2 AH2. The protein operates within porphyrin-containing compound metabolism; heme A biosynthesis; heme A from heme O: step 1/1. Functionally, catalyzes the conversion of heme O to heme A by two successive hydroxylations of the methyl group at C8. The first hydroxylation forms heme I, the second hydroxylation results in an unstable dihydroxymethyl group, which spontaneously dehydrates, resulting in the formyl group of heme A. The sequence is that of Heme A synthase from Exiguobacterium sp. (strain ATCC BAA-1283 / AT1b).